A 388-amino-acid polypeptide reads, in one-letter code: Succinate--CoA ligase [ADP-forming] subunit beta (388 aa).

The region spanning 9 to 244 (KQLFARYGLP…QSQEDPREAQ (236 aa)) is the ATP-grasp domain. ATP-binding positions include K46, 53-55 (GRG), E99, T102, and E107. The Mg(2+) site is built by N199 and D213. Substrate-binding positions include N264 and 321–323 (GIV).

It belongs to the succinate/malate CoA ligase beta subunit family. As to quaternary structure, heterotetramer of two alpha and two beta subunits. The cofactor is Mg(2+).

The catalysed reaction is succinate + ATP + CoA = succinyl-CoA + ADP + phosphate. It catalyses the reaction GTP + succinate + CoA = succinyl-CoA + GDP + phosphate. It functions in the pathway carbohydrate metabolism; tricarboxylic acid cycle; succinate from succinyl-CoA (ligase route): step 1/1. Succinyl-CoA synthetase functions in the citric acid cycle (TCA), coupling the hydrolysis of succinyl-CoA to the synthesis of either ATP or GTP and thus represents the only step of substrate-level phosphorylation in the TCA. The beta subunit provides nucleotide specificity of the enzyme and binds the substrate succinate, while the binding sites for coenzyme A and phosphate are found in the alpha subunit. This is Succinate--CoA ligase [ADP-forming] subunit beta from Enterobacter sp. (strain 638).